Reading from the N-terminus, the 651-residue chain is Endo-1,4-beta-xylanase A (651 aa).

The first 30 residues, 1 to 30 (MKRKVKKMAAMATSIIMAIMIILHSIPVLA), serve as a signal peptide directing secretion. Positions 33–227 (IIYDNETGTH…SSGYANVYKN (195 aa)) constitute a GH11 domain. Glutamate 124 (nucleophile) is an active-site residue. The active-site Proton donor is the glutamate 214. 3 consecutive CBM6 domains span residues 250-370 (SIIE…FIFS), 387-507 (SIIQ…FVFT), and 527-647 (SNIQ…FVFS). Residues glutamate 253 and glutamate 255 each coordinate Ca(2+). Threonine 270 is a binding site for D-xylotriose. Arginine 275 serves as a coordination point for Ca(2+). The stretch at 278–339 (GYIENGNTVT…SSTGSWNTYQ (62 aa)) is repeat 1. The 3 X 61 AA approximate repeats stretch occupies residues 278-616 (GYIENGNTVT…GSTGSFDTYR (339 aa)). D-xylotriose is bound by residues tyrosine 279, asparagine 336, and asparagine 363. D-xylobiose contacts are provided by tyrosine 279, asparagine 336, and asparagine 363. Aspartate 365 lines the Ca(2+) pocket. The stretch at 415–476 (GYIENGYSTT…PSTNSWDSYQ (62 aa)) is repeat 2. Ca(2+) is bound by residues glutamine 530, glutamate 532, and serine 552. Repeat 3 spans residues 555–616 (GYIENGYSTT…GSTGSFDTYR (62 aa)). Residues tyrosine 556, aspartate 613, and asparagine 640 each contribute to the D-xylotriose site. Aspartate 642 contacts Ca(2+).

Belongs to the glycosyl hydrolase 11 (cellulase G) family.

The protein resides in the secreted. The enzyme catalyses Endohydrolysis of (1-&gt;4)-beta-D-xylosidic linkages in xylans.. It participates in glycan degradation; xylan degradation. Functionally, endoxylanase that degrades arabinoxylan and glucuronoxylan to xylobiose and xylotriose (in vitro). In Thermoclostridium stercorarium (Clostridium stercorarium), this protein is Endo-1,4-beta-xylanase A (xynA).